The primary structure comprises 397 residues: MKTVGELELSGKRVFIRVDFNVPLDKEFRVKDDLRIRAVLPTLNKVIEKGGKAILASHLGRPKGKPSAEFSLKPVGEHLSRLIDRPVPLAPDCTGREVVERIAQMKNGDVLLLENLRFHAEEEKNDEAFSRALADLADVYVNDAFAVSHRAHASVHGMTRFARECAAGYQLENEIKYFRKAMDNPARPMAMVIGGAKVSTKIGVLEHLISRVDFLVIGGAMANTFFKAQGKEVGRSLVEDDHLETAARLLKAAAEKGVKVYLPVDAVVAPSLESCGDVQQVPVEKVPKDRLILDVGSKSIEVFESVLKNCRTIVWNGPLGAFETPPFNKGTFALAEFLGSLDALTVIGGGDSAAAVKQANMEDKVSYVSTGGGAFLEMLEGITLPGVAALEECCGRS.

Residues Asp-19 to Asn-21, Arg-35, His-58 to Arg-61, Arg-117, and Arg-150 contribute to the substrate site. ATP is bound by residues Lys-201, Glu-323, and Gly-349–Ser-352.

It belongs to the phosphoglycerate kinase family. In terms of assembly, monomer.

The protein resides in the cytoplasm. It catalyses the reaction (2R)-3-phosphoglycerate + ATP = (2R)-3-phospho-glyceroyl phosphate + ADP. The protein operates within carbohydrate degradation; glycolysis; pyruvate from D-glyceraldehyde 3-phosphate: step 2/5. The polypeptide is Phosphoglycerate kinase (Syntrophobacter fumaroxidans (strain DSM 10017 / MPOB)).